The chain runs to 181 residues: uncharacterized protein (181 aa).

This is an uncharacterized protein from Sinorhizobium fredii (strain NBRC 101917 / NGR234).